Reading from the N-terminus, the 296-residue chain is Giardin subunit alpha-3 (296 aa).

4 Annexin repeats span residues 3–72, 74–146, 153–222, and 226–295; these read DTVT…SNCW, ELPV…TWIK, NNIN…TAHY, and GMNN…VLWR.

The protein belongs to the annexin family. Giardin subunit alpha subfamily.

Its subcellular location is the cytoplasm. The protein resides in the cytoskeleton. Functionally, giardins are involved in parasite attachment to the intestinal mucosa and in the cytoskeletal disassembly and reassembly that marks the transition from infectious trophozoite to transmissible cyst. They may interact with other cytoskeletal proteins such as microtubules in the microribbons or crossbridges, to maintain the integrity of the ventral disk. This chain is Giardin subunit alpha-3, found in Giardia intestinalis (Giardia lamblia).